The sequence spans 362 residues: O-methyltransferase 13 (362 aa).

S-adenosyl-L-homocysteine-binding residues include Ser-181, Gly-205, Asp-228, Asp-248, and Lys-262. Residue Asp-228 participates in S-adenosyl-L-methionine binding. The active-site Proton acceptor is His-266.

It belongs to the class I-like SAM-binding methyltransferase superfamily. Cation-independent O-methyltransferase family. As to quaternary structure, homodimer. In terms of tissue distribution, mainly expressed in vascular and cortical tissues.

The catalysed reaction is dopamine + S-adenosyl-L-methionine = 3-methoxytyramine + S-adenosyl-L-homocysteine + H(+). The protein operates within aromatic compound metabolism. Its pathway is alkaloid biosynthesis. Its function is as follows. O-methyltransferase participating in the biosynthesis of natural products derived from phenylethylamine, including mescaline, a natural hallucinogen potentially used in psychotherapeutic treatments. Catalyzes the O-methylation of dopamine and 4,5-dihydroxy-3-methoxyphenethylamine. This is O-methyltransferase 13 from Lophophora williamsii (Peyote).